Reading from the N-terminus, the 197-residue chain is RNA polymerase II subunit A C-terminal domain phosphatase ssup-72 (197 aa).

Ser-39 carries the post-translational modification Phosphoserine.

This sequence belongs to the SSU72 phosphatase family. As to quaternary structure, may interact with synd-1 (via C-terminus); the interaction may prevent ssup-72 binding to RNA polymerase II ama-1. May interact with RNA polymerase II ama-1. In terms of processing, may be phosphorylated by kin-20. In terms of tissue distribution, expressed in epidermis, intestine and nervous system.

It is found in the nucleus. It catalyses the reaction O-phospho-L-seryl-[protein] + H2O = L-seryl-[protein] + phosphate. It carries out the reaction O-phospho-L-threonyl-[protein] + H2O = L-threonyl-[protein] + phosphate. Its function is as follows. Protein phosphatase that dephosphorylates 'Ser-5' of the heptad repeats YSPTSPS in the C-terminal domain of the large RNA polymerase II subunit ama-1. By regulating the phosphorylation status of ama-1 and thus ama-1 binding to specific polyadenylation sites, regulates alternative polyadenylation of pre-mRNAs, including unc-44 and dlk-1 mRNAs. This results in the tissue-specific expression of unc-44 isoforms. This Caenorhabditis elegans protein is RNA polymerase II subunit A C-terminal domain phosphatase ssup-72.